The primary structure comprises 464 residues: tRNA modification GTPase MnmE (464 aa).

Residues R29, E91, and R131 each contribute to the (6S)-5-formyl-5,6,7,8-tetrahydrofolate site. Positions G226–G387 constitute a TrmE-type G domain. N236 lines the K(+) pocket. Residues N236–S241, T255–T261, and D280–G283 contribute to the GTP site. Residue S240 coordinates Mg(2+). 3 residues coordinate K(+): T255, L257, and T260. T261 provides a ligand contact to Mg(2+). K464 provides a ligand contact to (6S)-5-formyl-5,6,7,8-tetrahydrofolate.

The protein belongs to the TRAFAC class TrmE-Era-EngA-EngB-Septin-like GTPase superfamily. TrmE GTPase family. Homodimer. Heterotetramer of two MnmE and two MnmG subunits. It depends on K(+) as a cofactor.

Its subcellular location is the cytoplasm. Exhibits a very high intrinsic GTPase hydrolysis rate. Involved in the addition of a carboxymethylaminomethyl (cmnm) group at the wobble position (U34) of certain tRNAs, forming tRNA-cmnm(5)s(2)U34. This Prochlorococcus marinus (strain NATL2A) protein is tRNA modification GTPase MnmE.